Reading from the N-terminus, the 554-residue chain is Hyaluronan synthase 3 (554 aa).

The Cytoplasmic portion of the chain corresponds to 1-15 (MPVQLTTALRVVGTS). Residues 16 to 36 (LFALVVLGGILAAYVTGYQFI) traverse the membrane as a helical segment. Residues 37 to 44 (HTEKHYLS) are Extracellular-facing. The chain crosses the membrane as a helical span at residues 45-65 (FGLYGAILGLHLLIQSLFAFL). Over 66 to 378 (EHRRMRRAGR…NSLWFHKHHL (313 aa)) the chain is Cytoplasmic. Residues 379 to 399 (WMTYESVVTGFFPFFLIATVI) form a helical membrane-spanning segment. Over 400–409 (QLFYRGRIWN) the chain is Extracellular. Residues 410–430 (ILLFLLTVQLVGIIKATYACF) traverse the membrane as a helical segment. Residues 431-441 (LRGNAEMIFMS) are Cytoplasmic-facing. The chain crosses the membrane as a helical span at residues 442–462 (LYSLLYMSSLLPAKIFAIATI). Residue asparagine 463 is glycosylated (N-linked (GlcNAc...) asparagine). Topologically, residues 463–474 (NKSGWGTSGRKT) are extracellular. Residues 475-495 (IVVNFIGLIPVSIWVAVLLGG) form a helical membrane-spanning segment. At 496–516 (LAYTAYCQDLFSETELAFLVS) the chain is on the cytoplasmic side. Residues 517–537 (GAILYGCYWVALLMLYLAIIA) traverse the membrane as a helical segment. The Extracellular portion of the chain corresponds to 538 to 554 (RRCGKKPEQYSLAFAEV).

It belongs to the NodC/HAS family. Requires Mg(2+) as cofactor. Post-translationally, O-GlcNAcylation increases the hyaluronan synthase activity, HAS3 stability and its plasma membrane residence. The concentration of UDP-GlcNAc controls the level of O-GlcNAc modification.

It localises to the cell membrane. It is found in the golgi apparatus membrane. Its subcellular location is the golgi apparatus. The protein localises to the trans-Golgi network membrane. The protein resides in the cytoplasmic vesicle. The enzyme catalyses [hyaluronan](n) + UDP-N-acetyl-alpha-D-glucosamine = N-acetyl-beta-D-glucosaminyl-(1-&gt;4)-[hyaluronan](n) + UDP + H(+). It catalyses the reaction N-acetyl-beta-D-glucosaminyl-(1-&gt;4)-[hyaluronan](n) + UDP-alpha-D-glucuronate = [hyaluronan](n+1) + UDP + H(+). It participates in glycan biosynthesis; hyaluronan biosynthesis. Functionally, catalyzes the addition of GlcNAc or GlcUA monosaccharides to the nascent hyaluronan polymer. Therefore, it is essential to hyaluronan synthesis a major component of most extracellular matrices that has a structural role in tissues architectures and regulates cell adhesion, migration and differentiation. This is one of three isoenzymes responsible for cellular hyaluronan synthesis. The chain is Hyaluronan synthase 3 (Has3) from Mus musculus (Mouse).